Here is a 404-residue protein sequence, read N- to C-terminus: Cysteine desulfurase IscS (404 aa).

Pyridoxal 5'-phosphate-binding positions include 75 to 76 (AT), Asn155, Gln183, and 203 to 205 (SGH). Lys206 is modified (N6-(pyridoxal phosphate)lysine). Thr243 serves as a coordination point for pyridoxal 5'-phosphate. The active-site Cysteine persulfide intermediate is the Cys328. Position 328 (Cys328) interacts with [2Fe-2S] cluster.

It belongs to the class-V pyridoxal-phosphate-dependent aminotransferase family. NifS/IscS subfamily. As to quaternary structure, homodimer. Forms a heterotetramer with IscU, interacts with other sulfur acceptors. Pyridoxal 5'-phosphate serves as cofactor.

The protein localises to the cytoplasm. It catalyses the reaction (sulfur carrier)-H + L-cysteine = (sulfur carrier)-SH + L-alanine. It participates in cofactor biosynthesis; iron-sulfur cluster biosynthesis. Its function is as follows. Master enzyme that delivers sulfur to a number of partners involved in Fe-S cluster assembly, tRNA modification or cofactor biosynthesis. Catalyzes the removal of elemental sulfur atoms from cysteine to produce alanine. Functions as a sulfur delivery protein for Fe-S cluster synthesis onto IscU, an Fe-S scaffold assembly protein, as well as other S acceptor proteins. This is Cysteine desulfurase IscS from Shewanella denitrificans (strain OS217 / ATCC BAA-1090 / DSM 15013).